A 185-amino-acid chain; its full sequence is Gastrokine-1 (185 aa).

Residues Met1 to Ala20 form the signal peptide. Residues Asn54 to Ala150 form the BRICHOS domain. Cysteines 81 and 142 form a disulfide.

This sequence belongs to the gastrokine family. In terms of tissue distribution, highly expressed specifically in surface cells of the antrum mucosa from where it is secreted.

The protein localises to the secreted. The protein resides in the cytoplasmic granule. It localises to the golgi apparatus. Has mitogenic activity and may be involved in maintaining the integrity of the gastric mucosal epithelium. This is Gastrokine-1 (GKN1) from Sus scrofa (Pig).